A 944-amino-acid chain; its full sequence is MKGPSIVVKGARAHNLKGVDIELPKNKLIVMTGLSGSGKSSLAFDTIYAEGQRRYVESLSAYARQFLGQMDKPDVDTIEGLSPAISIDQKTTSKNPRSTVATVTEIYDYIRLLYARVGKPYCPYHGIEIESQTVQQMVDRILELEERTKIQLLAPVISHRKGSHEKLIEDIGKKGYVRLRVDDEIVDVNEVPQLDKNKNHTIEVVVDRLVVKDGIETRLADSIETALELAEGNLTVDVINGEELKFSENHACPICGFSIGELEPRMFSFNSPFGACPTCDGLGQKLKVDLDLVIPDKNKTLNEGAIEPWEPTSSDFYPTLLKRVCEVYKINMDKPYKKLTDRQKNILMNGSGEKEIEFTFTQRNGGTRKRKMVFEGVVPNIDRRYHESPSEYTREMMSKYMTELPCETCHGKRLSKEALSVYVGDYNIGEVVEYSIKNALYYFENLKLSDQDKSIADQILKEIISRLSFLNNVGLEYLTLDRSSGTLSGGEAQRIRLATQIGSRLTGVLYVLDEPSIGLHQRDNDRLINTLKEMRDLGNTLIVVEHDDDTMRAADYLVDVGPGAGNHGGEVVSSGTPNKVMKDKKSLTGQYLSGKKRIEVPEYRREITDRKIQIKGAKSNNLKNVNVDFPLSVLTVVTGVSGSGKSSLVNEILYKALAQKINKSKVKPGNFDEIKGIDQLDKIIDIDQSPIGRTPRSNPATYTGVFDDIRDVFAQTNEAKIRGYQKGRFSFNVKGGRCEACKGDGIIKIEMHFLPDVYVPCEVCDGKRYNRETLEVTYKGKNIADVLEMTVEEATHFFENIPKIKRKLQTLVDVGLGYITLGQQGTTLSGGEAQRVKLASELHKRSTGRSIYILDEPTTGLHVDDISRLLKVLNRIVENGDTVVIIEHNLDVIKTADHIIDLGPEGGEGGGTIIATGTPEEIAQNKGSYTGQYLKPVLERDSVE.

Residue 33-40 coordinates ATP; it reads GLSGSGKS. The segment at 252–279 adopts a C4-type zinc-finger fold; that stretch reads CPICGFSIGELEPRMFSFNSPFGACPTC. ABC transporter domains lie at 309–587 and 607–935; these read WEPT…KKSL and ITDR…QYLK. 639–646 is a binding site for ATP; sequence GVSGSGKS. The segment at 738–764 adopts a C4-type zinc-finger fold; that stretch reads CEACKGDGIIKIEMHFLPDVYVPCEVC.

This sequence belongs to the ABC transporter superfamily. UvrA family. In terms of assembly, forms a heterotetramer with UvrB during the search for lesions.

Its subcellular location is the cytoplasm. Functionally, the UvrABC repair system catalyzes the recognition and processing of DNA lesions. UvrA is an ATPase and a DNA-binding protein. A damage recognition complex composed of 2 UvrA and 2 UvrB subunits scans DNA for abnormalities. When the presence of a lesion has been verified by UvrB, the UvrA molecules dissociate. The sequence is that of UvrABC system protein A from Staphylococcus epidermidis (strain ATCC 12228 / FDA PCI 1200).